Here is a 572-residue protein sequence, read N- to C-terminus: Methionine--tRNA ligase (572 aa).

The 'HIGH' region motif lies at Pro11–Asn21. Zn(2+)-binding residues include Cys143, Cys146, Cys156, and Cys159. The 'KMSKS' region motif lies at Gln346 to Ser350. An ATP-binding site is contributed by Thr349.

It belongs to the class-I aminoacyl-tRNA synthetase family. MetG type 1 subfamily. Monomer. The cofactor is Zn(2+).

Its subcellular location is the cytoplasm. The catalysed reaction is tRNA(Met) + L-methionine + ATP = L-methionyl-tRNA(Met) + AMP + diphosphate. Its function is as follows. Is required not only for elongation of protein synthesis but also for the initiation of all mRNA translation through initiator tRNA(fMet) aminoacylation. This is Methionine--tRNA ligase from Cereibacter sphaeroides (strain KD131 / KCTC 12085) (Rhodobacter sphaeroides).